Reading from the N-terminus, the 173-residue chain is Orotate phosphoribosyltransferase (173 aa).

Residues arginine 87, lysine 88, lysine 91, and 113-121 (EDIATTGQS) each bind 5-phospho-alpha-D-ribose 1-diphosphate. The orotate site is built by threonine 117 and arginine 145.

This sequence belongs to the purine/pyrimidine phosphoribosyltransferase family. PyrE subfamily. In terms of assembly, homodimer. Mg(2+) serves as cofactor.

It carries out the reaction orotidine 5'-phosphate + diphosphate = orotate + 5-phospho-alpha-D-ribose 1-diphosphate. The protein operates within pyrimidine metabolism; UMP biosynthesis via de novo pathway; UMP from orotate: step 1/2. Functionally, catalyzes the transfer of a ribosyl phosphate group from 5-phosphoribose 1-diphosphate to orotate, leading to the formation of orotidine monophosphate (OMP). In Natronomonas pharaonis (strain ATCC 35678 / DSM 2160 / CIP 103997 / JCM 8858 / NBRC 14720 / NCIMB 2260 / Gabara) (Halobacterium pharaonis), this protein is Orotate phosphoribosyltransferase.